Consider the following 208-residue polypeptide: Large ribosomal subunit protein uL3 (208 aa).

The tract at residues Lys-122–Ala-148 is disordered.

It belongs to the universal ribosomal protein uL3 family. In terms of assembly, part of the 50S ribosomal subunit. Forms a cluster with proteins L14 and L19.

Functionally, one of the primary rRNA binding proteins, it binds directly near the 3'-end of the 23S rRNA, where it nucleates assembly of the 50S subunit. The chain is Large ribosomal subunit protein uL3 from Streptococcus pyogenes serotype M1.